Reading from the N-terminus, the 626-residue chain is Endo-1,3(4)-beta-glucanase xgeA (626 aa).

An N-terminal signal peptide occupies residues 1 to 25; the sequence is MSSSLMRRVGSLAASAIIFPGIAHA. The region spanning 33–286 is the GH16 domain; the sequence is ESWEGEKILN…WAGGVFGDSG (254 aa). Asn61 is a glycosylation site (N-linked (GlcNAc...) asparagine). The Nucleophile role is filled by Glu142. Glu147 acts as the Proton donor in catalysis. Residues 477 to 494 show a composition bias toward low complexity; that stretch reads ASTDAAAATTPAAEPHPS. Residues 477-533 are disordered; the sequence is ASTDAAAATTPAAEPHPSNAETPADSKSSADAVTAQATKTTIAVNTPNPATDSASSV. Positions 495–533 are enriched in polar residues; the sequence is NAETPADSKSSADAVTAQATKTTIAVNTPNPATDSASSV. Gly603 carries the GPI-anchor amidated glycine lipid modification. The propeptide at 604 to 626 is removed in mature form; it reads VGSKVSISASVAIAAFVMLLLVN.

It belongs to the glycosyl hydrolase 16 family.

The protein localises to the cell membrane. It carries out the reaction Endohydrolysis of (1-&gt;3)- or (1-&gt;4)-linkages in beta-D-glucans when the glucose residue whose reducing group is involved in the linkage to be hydrolyzed is itself substituted at C-3.. In terms of biological role, mixed-linked glucanase involved in the degradation of complex natural cellulosic substrates. Active on laminarin. lichenan, soluble carboxymethyl cellulose but not on pustulan. The polypeptide is Endo-1,3(4)-beta-glucanase xgeA (xgeA) (Emericella nidulans (strain FGSC A4 / ATCC 38163 / CBS 112.46 / NRRL 194 / M139) (Aspergillus nidulans)).